We begin with the raw amino-acid sequence, 590 residues long: DNA primase (590 aa).

The segment at 37 to 61 (CPFHKEKTPSFSVSPTKQFYHCFSC) adopts a CHC2-type zinc-finger fold. In terms of domain architecture, Toprim spans 255 to 337 (GRILVVEGYM…DKSLHFLFLP (83 aa)). Mg(2+) is bound by residues glutamate 261, aspartate 305, and aspartate 307.

Belongs to the DnaG primase family. Monomer. Interacts with DnaB. Zn(2+) serves as cofactor. Requires Mg(2+) as cofactor.

The catalysed reaction is ssDNA + n NTP = ssDNA/pppN(pN)n-1 hybrid + (n-1) diphosphate.. In terms of biological role, RNA polymerase that catalyzes the synthesis of short RNA molecules used as primers for DNA polymerase during DNA replication. The sequence is that of DNA primase from Neisseria meningitidis serogroup A / serotype 4A (strain DSM 15465 / Z2491).